The sequence spans 314 residues: Serine/threonine-protein phosphatase PP2A-4 catalytic subunit (314 aa).

Residues D62, H64, D90, and N122 each contribute to the Mn(2+) site. The active-site Proton donor is the H123. Residues H172 and H246 each contribute to the Mn(2+) site.

This sequence belongs to the PPP phosphatase family. PP-2A subfamily. Mn(2+) is required as a cofactor.

The protein localises to the cytoplasm. The catalysed reaction is O-phospho-L-seryl-[protein] + H2O = L-seryl-[protein] + phosphate. It carries out the reaction O-phospho-L-threonyl-[protein] + H2O = L-threonyl-[protein] + phosphate. This is Serine/threonine-protein phosphatase PP2A-4 catalytic subunit (PP2A4) from Oryza sativa subsp. japonica (Rice).